Here is a 284-residue protein sequence, read N- to C-terminus: Lipoyl synthase (284 aa).

Cys38, Cys43, Cys49, Cys64, Cys68, Cys71, and Ser277 together coordinate [4Fe-4S] cluster. Positions 50–266 (WSRGTATFLL…RDEALGMGFS (217 aa)) constitute a Radical SAM core domain.

It belongs to the radical SAM superfamily. Lipoyl synthase family. [4Fe-4S] cluster serves as cofactor.

The protein resides in the cytoplasm. The enzyme catalyses [[Fe-S] cluster scaffold protein carrying a second [4Fe-4S](2+) cluster] + N(6)-octanoyl-L-lysyl-[protein] + 2 oxidized [2Fe-2S]-[ferredoxin] + 2 S-adenosyl-L-methionine + 4 H(+) = [[Fe-S] cluster scaffold protein] + N(6)-[(R)-dihydrolipoyl]-L-lysyl-[protein] + 4 Fe(3+) + 2 hydrogen sulfide + 2 5'-deoxyadenosine + 2 L-methionine + 2 reduced [2Fe-2S]-[ferredoxin]. It participates in protein modification; protein lipoylation via endogenous pathway; protein N(6)-(lipoyl)lysine from octanoyl-[acyl-carrier-protein]: step 2/2. Its function is as follows. Catalyzes the radical-mediated insertion of two sulfur atoms into the C-6 and C-8 positions of the octanoyl moiety bound to the lipoyl domains of lipoate-dependent enzymes, thereby converting the octanoylated domains into lipoylated derivatives. This is Lipoyl synthase from Chlorobium phaeovibrioides (strain DSM 265 / 1930) (Prosthecochloris vibrioformis (strain DSM 265)).